The sequence spans 281 residues: Fructose-bisphosphate aldolase class 1 (281 aa).

Lys191 acts as the Schiff-base intermediate with dihydroxyacetone-P in catalysis.

The protein belongs to the DeoC/FbaB aldolase family. In terms of assembly, homooctamer.

The protein resides in the cytoplasm. It is found in the chromosome. It carries out the reaction beta-D-fructose 1,6-bisphosphate = D-glyceraldehyde 3-phosphate + dihydroxyacetone phosphate. Its activity is regulated as follows. Activated by citrate. This is Fructose-bisphosphate aldolase class 1 (fba) from Thermococcus kodakarensis (strain ATCC BAA-918 / JCM 12380 / KOD1) (Pyrococcus kodakaraensis (strain KOD1)).